Consider the following 284-residue polypeptide: Shikimate dehydrogenase (NADP(+)) (284 aa).

Residues 20–22 (SIS) and Ser67 each bind shikimate. Residue Lys71 is the Proton acceptor of the active site. NADP(+) is bound at residue Asp83. Residues Asn92 and Asp107 each contribute to the shikimate site. NADP(+) contacts are provided by residues 129 to 133 (GAGGA) and Ile227. Tyr229 is a shikimate binding site. Gly250 contributes to the NADP(+) binding site.

Belongs to the shikimate dehydrogenase family. As to quaternary structure, homodimer.

It carries out the reaction shikimate + NADP(+) = 3-dehydroshikimate + NADPH + H(+). It participates in metabolic intermediate biosynthesis; chorismate biosynthesis; chorismate from D-erythrose 4-phosphate and phosphoenolpyruvate: step 4/7. Involved in the biosynthesis of the chorismate, which leads to the biosynthesis of aromatic amino acids. Catalyzes the reversible NADPH linked reduction of 3-dehydroshikimate (DHSA) to yield shikimate (SA). In Streptococcus pneumoniae (strain P1031), this protein is Shikimate dehydrogenase (NADP(+)).